A 1029-amino-acid polypeptide reads, in one-letter code: DNA repair protein RAD5A (1029 aa).

The segment at 83–104 is disordered; sequence SVGANHRVEEENESVNGGGEES. Residues 406–622 form the Helicase ATP-binding domain; it reads PSTLQMARGG…YSLLRFLRIE (217 aa). 419-426 contributes to the ATP binding site; the sequence is DAMGLGKT. The DEAH box signature appears at 573 to 576; it reads DEAH. The RING-type zinc finger occupies 794-834; sequence CPICLEALEDAVLTPCAHRLCRECLLASWRNSTSGLCPVCR. The region spanning 864–1029 is the Helicase C-terminal domain; it reads KITALLEELE…RIEELKMLFT (166 aa).

The protein belongs to the SNF2/RAD54 helicase family. RAD16 subfamily.

It localises to the nucleus. Functions in error-free postreplication DNA repair or DNA-damage tolerance (DTT) pathway. Required for homologous recombination (HR) induced by DNA double-strand break (DSB) in somatic cells. Required for damage-induced DNA repair, independently of MUS81 and RECQL4A. Plays a role in synthesis-dependent strand annealing (SDSA) but not in single-strand annealing (SSA). Possesses double-stranded DNA-dependent ATPase activity. Is able to regress replication forks with preference for forks with a leading strand gap. Is able to catalyze branch migration of Holliday junctions and is unaffected by protein blockades. The protein is DNA repair protein RAD5A of Arabidopsis thaliana (Mouse-ear cress).